Here is a 459-residue protein sequence, read N- to C-terminus: Trigger factor (459 aa).

The region spanning 166-245 is the PPIase FKBP-type domain; sequence GDFANIDLTA…VNSVKAEELP (80 aa).

The protein belongs to the FKBP-type PPIase family. Tig subfamily.

Its subcellular location is the cytoplasm. The catalysed reaction is [protein]-peptidylproline (omega=180) = [protein]-peptidylproline (omega=0). Functionally, involved in protein export. Acts as a chaperone by maintaining the newly synthesized protein in an open conformation. Functions as a peptidyl-prolyl cis-trans isomerase. The protein is Trigger factor of Bifidobacterium longum subsp. infantis (strain ATCC 15697 / DSM 20088 / JCM 1222 / NCTC 11817 / S12).